A 349-amino-acid polypeptide reads, in one-letter code: Histidinol-phosphate aminotransferase (349 aa).

N6-(pyridoxal phosphate)lysine is present on Lys-206.

This sequence belongs to the class-II pyridoxal-phosphate-dependent aminotransferase family. Histidinol-phosphate aminotransferase subfamily. In terms of assembly, homodimer. Pyridoxal 5'-phosphate serves as cofactor.

The catalysed reaction is L-histidinol phosphate + 2-oxoglutarate = 3-(imidazol-4-yl)-2-oxopropyl phosphate + L-glutamate. The protein operates within amino-acid biosynthesis; L-histidine biosynthesis; L-histidine from 5-phospho-alpha-D-ribose 1-diphosphate: step 7/9. The chain is Histidinol-phosphate aminotransferase from Streptococcus mutans serotype c (strain ATCC 700610 / UA159).